A 199-amino-acid chain; its full sequence is Transgelin-3 (199 aa).

One can recognise a Calponin-homology (CH) domain in the interval Ala24–Ala136. Ser163 carries the phosphoserine modification. A Calponin-like repeat occupies Ile174–Met199. Residues Leu176–Gly188 show a composition bias toward polar residues. Residues Leu176 to Met199 form a disordered region.

The protein belongs to the calponin family.

The sequence is that of Transgelin-3 (TAGLN3) from Pongo abelii (Sumatran orangutan).